Here is a 432-residue protein sequence, read N- to C-terminus: Glutamate-1-semialdehyde 2,1-aminomutase (432 aa).

N6-(pyridoxal phosphate)lysine is present on Lys270.

Belongs to the class-III pyridoxal-phosphate-dependent aminotransferase family. HemL subfamily. Homodimer. Pyridoxal 5'-phosphate is required as a cofactor.

Its subcellular location is the cytoplasm. It carries out the reaction (S)-4-amino-5-oxopentanoate = 5-aminolevulinate. It functions in the pathway porphyrin-containing compound metabolism; protoporphyrin-IX biosynthesis; 5-aminolevulinate from L-glutamyl-tRNA(Glu): step 2/2. The protein is Glutamate-1-semialdehyde 2,1-aminomutase of Acinetobacter baylyi (strain ATCC 33305 / BD413 / ADP1).